The primary structure comprises 383 residues: Succinate--CoA ligase [ADP-forming] subunit beta (383 aa).

In terms of domain architecture, ATP-grasp spans 9–241 (KEVLHKFNVS…YDEEVKEEIE (233 aa)). ATP contacts are provided by residues lysine 46, 53–55 (GRG), glutamate 99, serine 102, and glutamate 107. 2 residues coordinate Mg(2+): asparagine 196 and aspartate 210. Substrate contacts are provided by residues asparagine 261 and 318 to 320 (GIM).

Belongs to the succinate/malate CoA ligase beta subunit family. In terms of assembly, heterotetramer of two alpha and two beta subunits. It depends on Mg(2+) as a cofactor.

The enzyme catalyses succinate + ATP + CoA = succinyl-CoA + ADP + phosphate. The catalysed reaction is GTP + succinate + CoA = succinyl-CoA + GDP + phosphate. The protein operates within carbohydrate metabolism; tricarboxylic acid cycle; succinate from succinyl-CoA (ligase route): step 1/1. In terms of biological role, succinyl-CoA synthetase functions in the citric acid cycle (TCA), coupling the hydrolysis of succinyl-CoA to the synthesis of either ATP or GTP and thus represents the only step of substrate-level phosphorylation in the TCA. The beta subunit provides nucleotide specificity of the enzyme and binds the substrate succinate, while the binding sites for coenzyme A and phosphate are found in the alpha subunit. In Wolbachia sp. subsp. Drosophila simulans (strain wRi), this protein is Succinate--CoA ligase [ADP-forming] subunit beta.